A 322-amino-acid chain; its full sequence is AA9 family lytic polysaccharide monooxygenase A (322 aa).

The signal sequence occupies residues 1 to 15 (MKVLSLLAAASAASA). Cu(2+) is bound by residues histidine 16 and histidine 96. 2 disulfides stabilise this stretch: cysteine 54–cysteine 182 and cysteine 152–cysteine 237. Residues histidine 168 and glutamine 177 each contribute to the O2 site. Residues threonine 228 and threonine 236 are each glycosylated (O-linked (Man...) threonine). The 37-residue stretch at 286–322 (CTAAQWAQCGGMGFSGCTTCASPYTCKKMNDYYSQCS) folds into the CBM1 domain.

The protein belongs to the polysaccharide monooxygenase AA9 family. The cofactor is Cu(2+).

The protein localises to the secreted. The catalysed reaction is [(1-&gt;4)-beta-D-glucosyl]n+m + reduced acceptor + O2 = 4-dehydro-beta-D-glucosyl-[(1-&gt;4)-beta-D-glucosyl]n-1 + [(1-&gt;4)-beta-D-glucosyl]m + acceptor + H2O.. Lytic polysaccharide monooxygenase (LPMO) that depolymerizes crystalline and amorphous polysaccharides via the oxidation of scissile alpha- or beta-(1-4)-glycosidic bonds, yielding C4 oxidation products. Catalysis by LPMOs requires the reduction of the active-site copper from Cu(II) to Cu(I) by a reducing agent and H(2)O(2) or O(2) as a cosubstrate. Active on tamarind xyloglucan and konjac glucomannan. This Neurospora crassa (strain ATCC 24698 / 74-OR23-1A / CBS 708.71 / DSM 1257 / FGSC 987) protein is AA9 family lytic polysaccharide monooxygenase A (gh61-1).